Reading from the N-terminus, the 573-residue chain is Phosphomethylpyrimidine synthase (573 aa).

Substrate contacts are provided by residues N190, M219, Y248, H284, 304–306 (SRG), 345–348 (DGLR), and E384. Zn(2+) is bound at residue H388. Residue Y411 participates in substrate binding. A Zn(2+)-binding site is contributed by H452. C532, C535, and C540 together coordinate [4Fe-4S] cluster.

The protein belongs to the ThiC family. [4Fe-4S] cluster serves as cofactor.

The enzyme catalyses 5-amino-1-(5-phospho-beta-D-ribosyl)imidazole + S-adenosyl-L-methionine = 4-amino-2-methyl-5-(phosphooxymethyl)pyrimidine + CO + 5'-deoxyadenosine + formate + L-methionine + 3 H(+). The protein operates within cofactor biosynthesis; thiamine diphosphate biosynthesis. Catalyzes the synthesis of the hydroxymethylpyrimidine phosphate (HMP-P) moiety of thiamine from aminoimidazole ribotide (AIR) in a radical S-adenosyl-L-methionine (SAM)-dependent reaction. The polypeptide is Phosphomethylpyrimidine synthase (Geobacillus sp. (strain WCH70)).